The sequence spans 285 residues: HTH-type transcriptional regulator YofA (285 aa).

Residues 1-58 enclose the HTH lysR-type domain; the sequence is MESGDLKIFQAVAREGSITKAAQMLNYVQSNVTARVHNLEEDLNIRLFHRTNRGMKLT. The segment at residues 18–37 is a DNA-binding region (H-T-H motif); the sequence is ITKAAQMLNYVQSNVTARVH.

This sequence belongs to the LysR transcriptional regulatory family.

It is found in the cytoplasm. Its function is as follows. Regulates expression of the cell division protein ftsW, and is essential for cell viability during stationary phase. This chain is HTH-type transcriptional regulator YofA (yofA), found in Bacillus subtilis (strain 168).